The following is a 259-amino-acid chain: 7-cyano-7-deazaguanine synthase (259 aa).

Residue 32 to 42 (LSGGLDSVTCL) coordinates ATP. 4 residues coordinate Zn(2+): cysteine 223, cysteine 233, cysteine 236, and cysteine 239.

It belongs to the QueC family. Zn(2+) serves as cofactor.

It catalyses the reaction 7-carboxy-7-deazaguanine + NH4(+) + ATP = 7-cyano-7-deazaguanine + ADP + phosphate + H2O + H(+). The protein operates within purine metabolism; 7-cyano-7-deazaguanine biosynthesis. Its function is as follows. Catalyzes the ATP-dependent conversion of 7-carboxy-7-deazaguanine (CDG) to 7-cyano-7-deazaguanine (preQ(0)). The polypeptide is 7-cyano-7-deazaguanine synthase (Psychrobacter cryohalolentis (strain ATCC BAA-1226 / DSM 17306 / VKM B-2378 / K5)).